The sequence spans 943 residues: MTDSKYFTTTKKGEIFELKAELNSDKKEKKKEAVKKVIASMTVGKDVSALFPDVVNCMQTDNLELKKLVYLYLMNYAKSQPDMAIMAVNTFVKDCEDPNPLIRALAVRTMGCIRVDKITEYLCEPLRKCLKDEDPYVRKTAAVCVAKLHDINAQLVEDQGFLDTLKDLISDSNPMVVANAVAALSEIAESHPSSNLLDLNPQSINKLLTALNECTEWGQIFILDCLANYMPKDDREAQSICERVTPRLSHANSAVVLSAVKVLMKFMEMLSKDLDYYATLLKKLAPPLVTLLSAEPELQYVALRNINLIVQKRPEILKHEMKVFFVKYNDPIYVKLEKLDIMIRLASQANIAQVLAELKEYATEVDVDFVRKAVRAIGRCAIKVEQSAERCVSTLLDLIQTKVNYVVQEAIVVIKDIFRKYPNKYESVIATLCENLDSLDEPEARAAMIWIVGEYAERIDNADELLESFLEGFHDESTQVQLQLLTAIVKLFLKKPTETQELVQQVLSLATQDSDNPDLRDRGYIYWRLLSTDPVAAKEVVLAEKPLISEETDLIEPTLLDELICYIGTLASVYHKPPNAFVEGGRGVVHKSLPPRTASSESTESPETAPAGAPAGDQPDVIPAQGDLLGDLLNLDLGPPVSGPPLAASSVQMGAVDLLGGGLDSLIGDSNFGAPSASVAAAPAPARLGAPISSGLSDLFDLTSGVGTLSGSYVAPKAVWLPAMKAKGLEISGTFTRQAGSISMDLQLTNKALQVMTDFAIQFNRNSFGLAPAAPLQVHVPLSPNQTVEISLPLNTVGSVLKMEPLNNLQVAVKNNIDVFYFSTLYPLHVLFVEDGKMDRQMFLATWKDIANENEAQFQIRDCPLNTEAASNKLQSSNIFTVAKRNVEGQDMLYQSLKLTNGIWVLAELRIQPGNPSFTLSLKCRAPEVSQHVYQAYETILKN.

Lys318 is subject to N6-acetyllysine. Residue Tyr574 is modified to 3'-nitrotyrosine. The interval Gly584 to Val621 is disordered. Low complexity predominate over residues Pro594–Gly616.

This sequence belongs to the adaptor complexes large subunit family. In terms of assembly, adaptor protein complex 1 (AP-1) is a heterotetramer composed of two large adaptins (gamma-type subunit AP1G1 and beta-type subunit AP1B1), a medium adaptin (mu-type subunit AP1M1 or AP1M2) and a small adaptin (sigma-type subunit AP1S1 or AP1S2 or AP1S3). As to expression, widely expressed.

Its subcellular location is the cytoplasmic vesicle. It localises to the clathrin-coated vesicle membrane. The protein localises to the golgi apparatus. Its function is as follows. Subunit of clathrin-associated adaptor protein complex 1 that plays a role in protein sorting in the late-Golgi/trans-Golgi network (TGN) and/or endosomes. The AP complexes mediate both the recruitment of clathrin to membranes and the recognition of sorting signals within the cytosolic tails of transmembrane cargo molecules. The polypeptide is AP-1 complex subunit beta-1 (Ap1b1) (Mus musculus (Mouse)).